A 123-amino-acid polypeptide reads, in one-letter code: Large ribosomal subunit protein bL21 (123 aa).

Belongs to the bacterial ribosomal protein bL21 family. As to quaternary structure, part of the 50S ribosomal subunit. Contacts protein L20.

This protein binds to 23S rRNA in the presence of protein L20. This Rippkaea orientalis (strain PCC 8801 / RF-1) (Cyanothece sp. (strain PCC 8801)) protein is Large ribosomal subunit protein bL21.